A 341-amino-acid polypeptide reads, in one-letter code: tRNA N6-adenosine threonylcarbamoyltransferase (341 aa).

Fe cation is bound by residues H111 and H115. Substrate is bound by residues 134-138 (LVSGG), D167, G180, and N276. A Fe cation-binding site is contributed by D304.

This sequence belongs to the KAE1 / TsaD family. Requires Fe(2+) as cofactor.

It is found in the cytoplasm. It catalyses the reaction L-threonylcarbamoyladenylate + adenosine(37) in tRNA = N(6)-L-threonylcarbamoyladenosine(37) in tRNA + AMP + H(+). Its function is as follows. Required for the formation of a threonylcarbamoyl group on adenosine at position 37 (t(6)A37) in tRNAs that read codons beginning with adenine. Is involved in the transfer of the threonylcarbamoyl moiety of threonylcarbamoyl-AMP (TC-AMP) to the N6 group of A37, together with TsaE and TsaB. TsaD likely plays a direct catalytic role in this reaction. The polypeptide is tRNA N6-adenosine threonylcarbamoyltransferase (Pseudomonas aeruginosa (strain UCBPP-PA14)).